Reading from the N-terminus, the 275-residue chain is Thioredoxin-like 1-1, chloroplastic (275 aa).

A chloroplast-targeting transit peptide spans 1–72; the sequence is MTEVISKTSL…GDSQDESFRR (72 aa). Residues 73–206 form the Thioredoxin domain; the sequence is SSAITAQTTL…FRDALAKHGP (134 aa). Catalysis depends on nucleophile residues Cys129 and Cys132. The cysteines at positions 129 and 132 are disulfide-linked. Residues 238 to 275 are disordered; the sequence is KPVPVEKEAATPDSNPSLPVPLPSMSSNDEKTLVSAGR. Positions 249-264 are enriched in low complexity; sequence PDSNPSLPVPLPSMSS.

It belongs to the thioredoxin family.

The protein localises to the plastid. It localises to the chloroplast. In terms of biological role, thiol-disulfide oxidoreductase that may participate in various redox reactions. Possesses insulin disulfide bonds reducing activity. The sequence is that of Thioredoxin-like 1-1, chloroplastic from Arabidopsis thaliana (Mouse-ear cress).